The chain runs to 484 residues: Glycogen synthase 2 (484 aa).

Position 15 (lysine 15) interacts with ADP-alpha-D-glucose.

Belongs to the glycosyltransferase 1 family. Bacterial/plant glycogen synthase subfamily.

The enzyme catalyses [(1-&gt;4)-alpha-D-glucosyl](n) + ADP-alpha-D-glucose = [(1-&gt;4)-alpha-D-glucosyl](n+1) + ADP + H(+). Its pathway is glycan biosynthesis; glycogen biosynthesis. Synthesizes alpha-1,4-glucan chains using ADP-glucose. The protein is Glycogen synthase 2 of Geobacter metallireducens (strain ATCC 53774 / DSM 7210 / GS-15).